The chain runs to 602 residues: Chaperone protein dnaK (602 aa).

It belongs to the heat shock protein 70 family.

The protein resides in the plastid. It is found in the chloroplast. In terms of biological role, acts as a chaperone. This Thalassiosira pseudonana (Marine diatom) protein is Chaperone protein dnaK.